The following is a 194-amino-acid chain: 3-isopropylmalate dehydratase small subunit (194 aa).

Belongs to the LeuD family. LeuD type 1 subfamily. Heterodimer of LeuC and LeuD.

The enzyme catalyses (2R,3S)-3-isopropylmalate = (2S)-2-isopropylmalate. Its pathway is amino-acid biosynthesis; L-leucine biosynthesis; L-leucine from 3-methyl-2-oxobutanoate: step 2/4. Its function is as follows. Catalyzes the isomerization between 2-isopropylmalate and 3-isopropylmalate, via the formation of 2-isopropylmaleate. This chain is 3-isopropylmalate dehydratase small subunit, found in Brevibacillus brevis (strain 47 / JCM 6285 / NBRC 100599).